Reading from the N-terminus, the 266-residue chain is MVKIAVCGAAGRMGQRIIVAAKEAGCTVSGALERPGHELVGQDAGLIAGCGALGVAISDDLNAVVDGCDVLIDFTTPKVSLKNLEACALKKKAIVIGSTGFTPEERALAAELAKDIPAVLAPNMSVGVNVCFKILKDVAKTLGDDFDVEIVELHHNKKKDAPSGTAVRMGEVVAEALGRDYNKVANYHREGICGERTKEEIGMQTVRGGDIVGEHTVYFIGMGERIEISHRAMTRDMFSRGSVRAAQWVVGKAPGLYDMQDVLGLR.

NAD(+) contacts are provided by residues glycine 8 to methionine 13 and glutamate 33. NADP(+) is bound at residue arginine 34. Residues glycine 97–threonine 99 and alanine 121–methionine 124 each bind NAD(+). The active-site Proton donor/acceptor is the histidine 154. Position 155 (histidine 155) interacts with (S)-2,3,4,5-tetrahydrodipicolinate. Residue lysine 158 is the Proton donor of the active site. Position 164–165 (glycine 164–threonine 165) interacts with (S)-2,3,4,5-tetrahydrodipicolinate.

This sequence belongs to the DapB family.

It is found in the cytoplasm. It carries out the reaction (S)-2,3,4,5-tetrahydrodipicolinate + NAD(+) + H2O = (2S,4S)-4-hydroxy-2,3,4,5-tetrahydrodipicolinate + NADH + H(+). The enzyme catalyses (S)-2,3,4,5-tetrahydrodipicolinate + NADP(+) + H2O = (2S,4S)-4-hydroxy-2,3,4,5-tetrahydrodipicolinate + NADPH + H(+). It participates in amino-acid biosynthesis; L-lysine biosynthesis via DAP pathway; (S)-tetrahydrodipicolinate from L-aspartate: step 4/4. In terms of biological role, catalyzes the conversion of 4-hydroxy-tetrahydrodipicolinate (HTPA) to tetrahydrodipicolinate. This is 4-hydroxy-tetrahydrodipicolinate reductase from Geobacter metallireducens (strain ATCC 53774 / DSM 7210 / GS-15).